The following is a 235-amino-acid chain: Carboxy-S-adenosyl-L-methionine synthase (235 aa).

S-adenosyl-L-methionine-binding positions include Tyr35, Gly60–Ser62, Asp83–Asn84, Asn124, and Arg191.

The protein belongs to the class I-like SAM-binding methyltransferase superfamily. Cx-SAM synthase family. In terms of assembly, homodimer.

The enzyme catalyses prephenate + S-adenosyl-L-methionine = carboxy-S-adenosyl-L-methionine + 3-phenylpyruvate + H2O. Catalyzes the conversion of S-adenosyl-L-methionine (SAM) to carboxy-S-adenosyl-L-methionine (Cx-SAM). The protein is Carboxy-S-adenosyl-L-methionine synthase of Campylobacter jejuni subsp. jejuni serotype O:6 (strain 81116 / NCTC 11828).